The sequence spans 310 residues: Homoserine kinase (310 aa).

85 to 95 (PKGLGLGSSGA) lines the ATP pocket.

The protein belongs to the GHMP kinase family. Homoserine kinase subfamily.

It localises to the cytoplasm. It catalyses the reaction L-homoserine + ATP = O-phospho-L-homoserine + ADP + H(+). Its pathway is amino-acid biosynthesis; L-threonine biosynthesis; L-threonine from L-aspartate: step 4/5. Its function is as follows. Catalyzes the ATP-dependent phosphorylation of L-homoserine to L-homoserine phosphate. The protein is Homoserine kinase of Thermoplasma acidophilum (strain ATCC 25905 / DSM 1728 / JCM 9062 / NBRC 15155 / AMRC-C165).